Reading from the N-terminus, the 204-residue chain is Large ribosomal subunit protein uL4 (204 aa).

The segment at 49-75 (TKGRSDVSGGGKKPWRQKGRGGARAGS) is disordered.

This sequence belongs to the universal ribosomal protein uL4 family. Part of the 50S ribosomal subunit.

Its function is as follows. One of the primary rRNA binding proteins, this protein initially binds near the 5'-end of the 23S rRNA. It is important during the early stages of 50S assembly. It makes multiple contacts with different domains of the 23S rRNA in the assembled 50S subunit and ribosome. In terms of biological role, forms part of the polypeptide exit tunnel. This chain is Large ribosomal subunit protein uL4, found in Campylobacter jejuni subsp. doylei (strain ATCC BAA-1458 / RM4099 / 269.97).